The primary structure comprises 90 residues: RNA-binding protein Hfq (90 aa).

One can recognise a Sm domain in the interval 9-68 (DPFLNALRRERVPVSIYLVNGIKLQGQVESFDQFVILLKNTVSQMVYKHAISTVVPARPF).

The protein belongs to the Hfq family. As to quaternary structure, homohexamer.

Its function is as follows. RNA chaperone that binds small regulatory RNA (sRNAs) and mRNAs to facilitate mRNA translational regulation in response to envelope stress, environmental stress and changes in metabolite concentrations. Also binds with high specificity to tRNAs. In Shewanella baltica (strain OS155 / ATCC BAA-1091), this protein is RNA-binding protein Hfq.